The primary structure comprises 212 residues: Pyridoxine/pyridoxamine 5'-phosphate oxidase (212 aa).

FMN-binding positions include arginine 59–lysine 64, tyrosine 74–serine 75, lysine 81, and glutamine 103. Lysine 64 contributes to the substrate binding site. Substrate contacts are provided by tyrosine 121 and arginine 125. FMN contacts are provided by residues glutamine 138–serine 139 and tryptophan 183. Arginine 189–histidine 191 provides a ligand contact to substrate. Position 193 (arginine 193) interacts with FMN.

Belongs to the pyridoxamine 5'-phosphate oxidase family. As to quaternary structure, homodimer. It depends on FMN as a cofactor.

The catalysed reaction is pyridoxamine 5'-phosphate + O2 + H2O = pyridoxal 5'-phosphate + H2O2 + NH4(+). It carries out the reaction pyridoxine 5'-phosphate + O2 = pyridoxal 5'-phosphate + H2O2. It functions in the pathway cofactor metabolism; pyridoxal 5'-phosphate salvage; pyridoxal 5'-phosphate from pyridoxamine 5'-phosphate: step 1/1. It participates in cofactor metabolism; pyridoxal 5'-phosphate salvage; pyridoxal 5'-phosphate from pyridoxine 5'-phosphate: step 1/1. Functionally, catalyzes the oxidation of either pyridoxine 5'-phosphate (PNP) or pyridoxamine 5'-phosphate (PMP) into pyridoxal 5'-phosphate (PLP). In Rhodopseudomonas palustris (strain TIE-1), this protein is Pyridoxine/pyridoxamine 5'-phosphate oxidase.